We begin with the raw amino-acid sequence, 188 residues long: CASP-like protein 4B1 (188 aa).

Positions 1–11 are enriched in basic and acidic residues; it reads MTNPDKQKPVE. Residues 1-34 form a disordered region; sequence MTNPDKQKPVEVTDVETAAEKTSEPTPASGTSTI. The Cytoplasmic portion of the chain corresponds to 1–46; that stretch reads MTNPDKQKPVEVTDVETAAEKTSEPTPASGTSTITQRWKREDLIKK. The span at 24-34 shows a compositional bias: polar residues; that stretch reads EPTPASGTSTI. A helical membrane pass occupies residues 47 to 67; it reads ASPITRGICLLFSLLAFLIMV. Residues 68-84 are Extracellular-facing; the sequence is SNKHGYGRNFNEYEEYR. Residues 85-105 form a helical membrane-spanning segment; the sequence is YVLAISIISTLYTAWQTFAHF. Over 106 to 120 the chain is Cytoplasmic; it reads SKREFFDRRTSTLVD. Residues 121–141 form a helical membrane-spanning segment; that stretch reads FSGDQIVAYLLISAASSAIPL. Residues 142 to 156 lie on the Extracellular side of the membrane; the sequence is TNRFREGQDNIFTDS. Residues 157–177 traverse the membrane as a helical segment; sequence AASAISMAIFAFVALALSALF. Topologically, residues 178-188 are cytoplasmic; it reads SGYKLSTHSFI.

This sequence belongs to the Casparian strip membrane proteins (CASP) family. In terms of assembly, homodimer and heterodimers.

It localises to the cell membrane. This chain is CASP-like protein 4B1, found in Arabidopsis lyrata subsp. lyrata (Lyre-leaved rock-cress).